Consider the following 117-residue polypeptide: Probable non-functional immunoglobulin heavy variable 7-81 (117 aa).

Positions 1-19 (MDWTWSILFLVAAATGTYS) are cleaved as a signal peptide. Positions 20–44 (QVQLVQSGHEVKQPGASVKVSCKAS) are framework-1. The Ig-like domain occupies 20 to 117 (QVQLVQSGHE…EDMAMYYCAR (98 aa)). The cysteines at positions 41 and 115 are disulfide-linked. The interval 45 to 52 (GYSFTTYG) is complementarity-determining-1. The framework-2 stretch occupies residues 53–69 (MNWVPQAPGQGLEWMGW). A complementarity-determining-2 region spans residues 70–77 (FNTYTGNP). A glycan (N-linked (GlcNAc...) asparagine) is linked at N76. Residues 78-115 (TYAQGFTGRFVFSMDTSASTAYLQISSLKAEDMAMYYC) form a framework-3 region. The segment at 116 to 117 (AR) is complementarity-determining-3.

As to quaternary structure, immunoglobulins are composed of two identical heavy chains and two identical light chains; disulfide-linked.

Its subcellular location is the secreted. It is found in the cell membrane. Probable non-functional open reading frame (ORF) of V region of the variable domain of immunoglobulin heavy chains. Non-functional ORF generally cannot participate in the synthesis of a productive immunoglobulin chain due to altered V-(D)-J or switch recombination and/or splicing site (at mRNA level) and/or conserved amino acid change (protein level). Immunoglobulins, also known as antibodies, are membrane-bound or secreted glycoproteins produced by B lymphocytes. In the recognition phase of humoral immunity, the membrane-bound immunoglobulins serve as receptors which, upon binding of a specific antigen, trigger the clonal expansion and differentiation of B lymphocytes into immunoglobulins-secreting plasma cells. Secreted immunoglobulins mediate the effector phase of humoral immunity, which results in the elimination of bound antigens. The antigen binding site is formed by the variable domain of one heavy chain, together with that of its associated light chain. Thus, each immunoglobulin has two antigen binding sites with remarkable affinity for a particular antigen. The variable domains are assembled by a process called V-(D)-J rearrangement and can then be subjected to somatic hypermutations which, after exposure to antigen and selection, allow affinity maturation for a particular antigen. This is Probable non-functional immunoglobulin heavy variable 7-81 from Homo sapiens (Human).